A 338-amino-acid polypeptide reads, in one-letter code: Protein pelota homolog (338 aa).

The protein belongs to the eukaryotic release factor 1 family. Pelota subfamily. As to quaternary structure, monomer. Requires a divalent metal cation as cofactor.

Its subcellular location is the cytoplasm. In terms of biological role, may function in recognizing stalled ribosomes, interact with stem-loop structures in stalled mRNA molecules, and effect endonucleolytic cleavage of the mRNA. May play a role in the release non-functional ribosomes and degradation of damaged mRNAs. Has endoribonuclease activity. In Caldivirga maquilingensis (strain ATCC 700844 / DSM 13496 / JCM 10307 / IC-167), this protein is Protein pelota homolog.